We begin with the raw amino-acid sequence, 564 residues long: MQHETKMENQSWLKKLARRLGPGHIVNLCFIVVLLFSTLLTWREVVVLEDAYISSQRNHLENVANALDKHLQYNVDKLIFLRNGMREALVAPLDFTSLRDAVTEFEQHRDEHAWQIELNRRRTLSVNGVSDALVSEGNLLSRENESLDNEITAALEVGYLLRLAHNSSSMVEQAMYVSRAGFYVSTQPTLFTRNVPTRYYGYVTQPWFIGHSQRENRHRAVRWFTSQPEHASNTEPQVTVSVPVDSNNYWYGVLGMSIPVRTMQQFLRNAIDKNLDGEYQLYDSKLRFLTSSNPDHPTGNIFDPRELALLAQAMEHDTRGGIRMDSRYVSWERLDHFDGVLVRVHTLSEGVRGDFGSISIALTLLWALFTTMLLISWYVIRRMVSNMYVLQSSLQWQAWHDTLTRLYNRGALFEKARPLAKLCQTHQHPFSVIQVDLDHFKAINDRFGHQAGDRVLSHAAGLISSSLRAQDVAGRVGGEEFCVILPGASLTEAAEVAERIRLKLNEKEMLIAKSTTIRISASLGVSSSEETGDYDFEQLQSLADRRLYLAKQAGRNRVFASDNA.

Helical transmembrane passes span Leu-20–Leu-40 and Ile-360–Ile-380. The region spanning His-428–Asn-563 is the GGDEF domain. Residue Asp-436 participates in Mg(2+) binding. Substrate-binding residues include Asn-444, His-449, and Asp-453. Glu-479 is a Mg(2+) binding site. Glu-479 functions as the Proton acceptor in the catalytic mechanism.

Homodimer. Requires Mg(2+) as cofactor.

Its subcellular location is the cell inner membrane. It catalyses the reaction 2 GTP = 3',3'-c-di-GMP + 2 diphosphate. It participates in glycan metabolism; bacterial cellulose biosynthesis. The protein operates within purine metabolism; 3',5'-cyclic di-GMP biosynthesis. Its function is as follows. Catalyzes the synthesis of cyclic-di-GMP (c-di-GMP) via the condensation of 2 GTP molecules. Cyclic-di-GMP is a second messenger which controls cell surface-associated traits in bacteria. Involved in the regulation of cellulose production. The polypeptide is Probable diguanylate cyclase DgcQ (Escherichia coli O157:H7).